The chain runs to 521 residues: GMP synthase [glutamine-hydrolyzing] (521 aa).

The Glutamine amidotransferase type-1 domain occupies 10-204 (SLLILDFGSQ…ALGICGCEND (195 aa)). The active-site Nucleophile is C87. Active-site residues include H178 and E180. The GMPS ATP-PPase domain occupies 205–396 (WNMHNFAEEQ…LGMPREMLMR (192 aa)). 232 to 238 (SGGVDSS) contacts ATP.

Homodimer.

The catalysed reaction is XMP + L-glutamine + ATP + H2O = GMP + L-glutamate + AMP + diphosphate + 2 H(+). It functions in the pathway purine metabolism; GMP biosynthesis; GMP from XMP (L-Gln route): step 1/1. Catalyzes the synthesis of GMP from XMP. The sequence is that of GMP synthase [glutamine-hydrolyzing] from Wolinella succinogenes (strain ATCC 29543 / DSM 1740 / CCUG 13145 / JCM 31913 / LMG 7466 / NCTC 11488 / FDC 602W) (Vibrio succinogenes).